Consider the following 352-residue polypeptide: tRNA pseudouridine synthase D (352 aa).

D81 (nucleophile) is an active-site residue. The region spanning 157 to 303 (GVPNYFGTQR…MDHERRILRL (147 aa)) is the TRUD domain.

The protein belongs to the pseudouridine synthase TruD family.

It catalyses the reaction uridine(13) in tRNA = pseudouridine(13) in tRNA. In terms of biological role, responsible for synthesis of pseudouridine from uracil-13 in transfer RNAs. This chain is tRNA pseudouridine synthase D, found in Pseudomonas putida (strain GB-1).